The primary structure comprises 735 residues: Ethylene receptor 1 (735 aa).

3 helical membrane passes run 23-43 (ISDFFIAVAYFSIPLELIYFV), 54-74 (VLVQFGAFIVLCGATHLINLW), and 92-112 (VLTAVVSCATALMLVHIIPDL). Residues C65 and H69 each coordinate Cu cation. The 150-residue stretch at 158-307 (DRHTILKTTL…VVADQVAVAL (150 aa)) folds into the GAF domain. Residues 350–586 (VMNHEMRTPM…IFDVKLAISN (237 aa)) enclose the Histidine kinase domain. H353 bears the Phosphohistidine; by autocatalysis mark. Positions 609–726 (KVLVMDENGV…NMRNVLSDRL (118 aa)) constitute a Response regulatory domain. D657 bears the 4-aspartylphosphate mark. K711 participates in a covalent cross-link: Glycyl lysine isopeptide (Lys-Gly) (interchain with G-Cter in ubiquitin).

The protein belongs to the ethylene receptor family. As to quaternary structure, homodimer; disulfide-linked. Requires Cu cation as cofactor. Activation probably requires a transfer of a phosphate group between a His in the transmitter domain and an Asp of the receiver domain.

It is found in the endoplasmic reticulum membrane. It carries out the reaction ATP + protein L-histidine = ADP + protein N-phospho-L-histidine.. Functionally, may act early in the ethylene signal transduction pathway, possibly as an ethylene receptor, or as a regulator of the pathway. This is Ethylene receptor 1 (ETR1) from Brassica oleracea (Wild cabbage).